Reading from the N-terminus, the 117-residue chain is UPF0342 protein BLi01058/BL02870 (117 aa).

Belongs to the UPF0342 family.

In Bacillus licheniformis (strain ATCC 14580 / DSM 13 / JCM 2505 / CCUG 7422 / NBRC 12200 / NCIMB 9375 / NCTC 10341 / NRRL NRS-1264 / Gibson 46), this protein is UPF0342 protein BLi01058/BL02870.